The following is a 247-amino-acid chain: ATP synthase subunit a, chloroplastic (247 aa).

5 helical membrane-spanning segments follow: residues 38–58, 95–115, 134–154, 199–219, and 220–240; these read QVLITSWVVIAILLGSATLAV, VPFIGTMFLFIFVSNWSGALL, INTTVALALLTSVAYFYAGIS, LVVVVLVSLVPLVVPIPVMFL, and GLFTSGIQALIFATLAAAYIG.

Belongs to the ATPase A chain family. As to quaternary structure, F-type ATPases have 2 components, CF(1) - the catalytic core - and CF(0) - the membrane proton channel. CF(1) has five subunits: alpha(3), beta(3), gamma(1), delta(1), epsilon(1). CF(0) has four main subunits: a, b, b' and c.

The protein localises to the plastid. It is found in the chloroplast thylakoid membrane. Its function is as follows. Key component of the proton channel; it plays a direct role in the translocation of protons across the membrane. The polypeptide is ATP synthase subunit a, chloroplastic (Daucus carota (Wild carrot)).